The chain runs to 512 residues: Cytoplasmic tRNA 2-thiolation protein 2-A (512 aa).

It belongs to the CTU2/NCS2 family.

It is found in the cytoplasm. It participates in tRNA modification; 5-methoxycarbonylmethyl-2-thiouridine-tRNA biosynthesis. Plays a central role in 2-thiolation of mcm(5)S(2)U at tRNA wobble positions of tRNA(Lys), tRNA(Glu) and tRNA(Gln). May act by forming a heterodimer with ctu1/atpbd3 that ligates sulfur from thiocarboxylated urm1 onto the uridine of tRNAs at wobble position. The polypeptide is Cytoplasmic tRNA 2-thiolation protein 2-A (ctu2-a) (Xenopus laevis (African clawed frog)).